A 264-amino-acid chain; its full sequence is Glutamate racemase (264 aa).

Residues 10 to 11 (DS) and 42 to 43 (YG) contribute to the substrate site. The active-site Proton donor/acceptor is the C73. A substrate-binding site is contributed by 74-75 (NT). C183 serves as the catalytic Proton donor/acceptor. 184 to 185 (TH) is a substrate binding site.

Belongs to the aspartate/glutamate racemases family.

It carries out the reaction L-glutamate = D-glutamate. It functions in the pathway cell wall biogenesis; peptidoglycan biosynthesis. Its function is as follows. Provides the (R)-glutamate required for cell wall biosynthesis. This chain is Glutamate racemase, found in Streptococcus sanguinis (strain SK36).